Here is a 755-residue protein sequence, read N- to C-terminus: Xaa-Pro dipeptidyl-peptidase (755 aa).

Residues Ser348, Asp468, and His498 each act as charge relay system in the active site.

This sequence belongs to the peptidase S15 family. As to quaternary structure, homodimer.

The protein resides in the cytoplasm. It catalyses the reaction Hydrolyzes Xaa-Pro-|- bonds to release unblocked, N-terminal dipeptides from substrates including Ala-Pro-|-p-nitroanilide and (sequentially) Tyr-Pro-|-Phe-Pro-|-Gly-Pro-|-Ile.. Functionally, removes N-terminal dipeptides sequentially from polypeptides having unsubstituted N-termini provided that the penultimate residue is proline. This Streptococcus thermophilus protein is Xaa-Pro dipeptidyl-peptidase.